The primary structure comprises 400 residues: 1-deoxy-D-xylulose 5-phosphate reductoisomerase (400 aa).

The NADPH site is built by Thr-17, Gly-18, Ser-19, Ile-20, and Asn-131. Residue Lys-132 coordinates 1-deoxy-D-xylulose 5-phosphate. Residue Glu-133 coordinates NADPH. Asp-157 contributes to the Mn(2+) binding site. 1-deoxy-D-xylulose 5-phosphate contacts are provided by Ser-158, Glu-159, Ser-188, and His-211. A Mn(2+)-binding site is contributed by Glu-159. Gly-217 serves as a coordination point for NADPH. Positions 224, 229, 230, and 233 each coordinate 1-deoxy-D-xylulose 5-phosphate. Glu-233 contributes to the Mn(2+) binding site.

Belongs to the DXR family. Requires Mg(2+) as cofactor. Mn(2+) serves as cofactor.

The enzyme catalyses 2-C-methyl-D-erythritol 4-phosphate + NADP(+) = 1-deoxy-D-xylulose 5-phosphate + NADPH + H(+). The protein operates within isoprenoid biosynthesis; isopentenyl diphosphate biosynthesis via DXP pathway; isopentenyl diphosphate from 1-deoxy-D-xylulose 5-phosphate: step 1/6. Catalyzes the NADPH-dependent rearrangement and reduction of 1-deoxy-D-xylulose-5-phosphate (DXP) to 2-C-methyl-D-erythritol 4-phosphate (MEP). In Pseudomonas putida (strain ATCC 47054 / DSM 6125 / CFBP 8728 / NCIMB 11950 / KT2440), this protein is 1-deoxy-D-xylulose 5-phosphate reductoisomerase.